A 1048-amino-acid polypeptide reads, in one-letter code: Probable beta-glucosidase E (1048 aa).

The disordered stretch occupies residues 1-54 (MPPPPFRDAPSSAKSSQRYTPLHESIPEELNDKQYSSDADSLPLSDPSDGEDDS). Residues 1 to 150 (MPPPPFRDAP…WRTVYYSKYW (150 aa)) lie on the Cytoplasmic side of the membrane. The segment covering 36-47 (SSDADSLPLSDP) has biased composition (low complexity). Residues 151–171 (WRALIGVVVVLVLLVLVFLGL) traverse the membrane as a helical; Signal-anchor for type II membrane protein segment. Topologically, residues 172–1048 (ARSKQVGDEL…SRDLPLHGKY (877 aa)) are extracellular. N-linked (GlcNAc...) asparagine glycosylation is found at Asn-216, Asn-224, and Asn-410. The active site involves Asp-438. N-linked (GlcNAc...) asparagine glycosylation is found at Asn-481, Asn-520, Asn-578, Asn-895, and Asn-991. The segment at 508 to 527 (WERPPPDGEGGPNFSSWTDD) is disordered.

Belongs to the glycosyl hydrolase 3 family.

The protein resides in the cell membrane. The catalysed reaction is Hydrolysis of terminal, non-reducing beta-D-glucosyl residues with release of beta-D-glucose.. The protein operates within glycan metabolism; cellulose degradation. Beta-glucosidases are one of a number of cellulolytic enzymes involved in the degradation of cellulosic biomass. Catalyzes the last step releasing glucose from the inhibitory cellobiose. This chain is Probable beta-glucosidase E (bglE), found in Aspergillus oryzae (strain ATCC 42149 / RIB 40) (Yellow koji mold).